Reading from the N-terminus, the 371-residue chain is Dual-specificity RNA methyltransferase RlmN (371 aa).

Residue Glu99 is the Proton acceptor of the active site. The 228-residue stretch at 106–333 folds into the Radical SAM core domain; it reads DDNRATLCIS…AIRRASKGQD (228 aa). Cysteines 113 and 338 form a disulfide. [4Fe-4S] cluster-binding residues include Cys120, Cys124, and Cys127. S-adenosyl-L-methionine contacts are provided by residues 165–166, Ser197, 219–221, and Asn295; these read GE and SLN. Cys338 serves as the catalytic S-methylcysteine intermediate. Positions 345-371 are disordered; it reads LTVSPPAQESERNSARPDRSQGKGKHL. Residues 353-365 show a composition bias toward basic and acidic residues; it reads ESERNSARPDRSQ.

This sequence belongs to the radical SAM superfamily. RlmN family. Requires [4Fe-4S] cluster as cofactor.

It is found in the cytoplasm. It catalyses the reaction adenosine(2503) in 23S rRNA + 2 reduced [2Fe-2S]-[ferredoxin] + 2 S-adenosyl-L-methionine = 2-methyladenosine(2503) in 23S rRNA + 5'-deoxyadenosine + L-methionine + 2 oxidized [2Fe-2S]-[ferredoxin] + S-adenosyl-L-homocysteine. The enzyme catalyses adenosine(37) in tRNA + 2 reduced [2Fe-2S]-[ferredoxin] + 2 S-adenosyl-L-methionine = 2-methyladenosine(37) in tRNA + 5'-deoxyadenosine + L-methionine + 2 oxidized [2Fe-2S]-[ferredoxin] + S-adenosyl-L-homocysteine. Specifically methylates position 2 of adenine 2503 in 23S rRNA and position 2 of adenine 37 in tRNAs. m2A2503 modification seems to play a crucial role in the proofreading step occurring at the peptidyl transferase center and thus would serve to optimize ribosomal fidelity. In Syntrophotalea carbinolica (strain DSM 2380 / NBRC 103641 / GraBd1) (Pelobacter carbinolicus), this protein is Dual-specificity RNA methyltransferase RlmN.